The following is a 379-amino-acid chain: Chaperone protein DnaJ (379 aa).

One can recognise a J domain in the interval 5–70 (DYYEILGVPK…QKRAAYDQYG (66 aa)). The CR-type zinc-finger motif lies at 134-212 (GVTKEIRIPT…CHGHGRIEKT (79 aa)). Zn(2+) contacts are provided by C147, C150, C164, C167, C186, C189, C200, and C203. 4 CXXCXGXG motif repeats span residues 147–154 (CEVCHGSG), 164–171 (CPTCHGAG), 186–193 (CPHCQGRG), and 200–207 (CNSCHGHG).

The protein belongs to the DnaJ family. As to quaternary structure, homodimer. Zn(2+) serves as cofactor.

The protein localises to the cytoplasm. Functionally, participates actively in the response to hyperosmotic and heat shock by preventing the aggregation of stress-denatured proteins and by disaggregating proteins, also in an autonomous, DnaK-independent fashion. Unfolded proteins bind initially to DnaJ; upon interaction with the DnaJ-bound protein, DnaK hydrolyzes its bound ATP, resulting in the formation of a stable complex. GrpE releases ADP from DnaK; ATP binding to DnaK triggers the release of the substrate protein, thus completing the reaction cycle. Several rounds of ATP-dependent interactions between DnaJ, DnaK and GrpE are required for fully efficient folding. Also involved, together with DnaK and GrpE, in the DNA replication of plasmids through activation of initiation proteins. This is Chaperone protein DnaJ from Cronobacter sakazakii (strain ATCC BAA-894) (Enterobacter sakazakii).